A 492-amino-acid chain; its full sequence is Monocarboxylate transporter 3 (492 aa).

The Cytoplasmic segment spans residues 1 to 14; that stretch reads MGAGGPRRGAGPPD. The helical transmembrane segment at 15-35 threads the bilayer; that stretch reads GGWGWVVLGACFVVTGFAYGF. The Extracellular portion of the chain corresponds to 36 to 58; that stretch reads PKAVSVFFRELKRDFGAGYSDTA. A helical membrane pass occupies residues 59-79; it reads WVSSIMLAMLYGTGPLSSILV. The Cytoplasmic segment spans residues 80 to 85; it reads TRFGCR. The chain crosses the membrane as a helical span at residues 86–106; the sequence is PVMLAGGLLASAGMILASFAS. Residues 107-115 are Extracellular-facing; that stretch reads RLVELYLTA. A helical membrane pass occupies residues 116-136; the sequence is GVLTGLGLALNFQPSLIMLGL. At 137-146 the chain is on the cytoplasmic side; the sequence is YFERRRPLAN. The helical transmembrane segment at 147 to 167 threads the bilayer; it reads GLAAAGSPVFLSMLSPLGQLL. At 168-172 the chain is on the extracellular side; sequence GERFG. The helical transmembrane segment at 173 to 193 threads the bilayer; the sequence is WRGGFLLFGGLLLHCCACGAV. The Cytoplasmic portion of the chain corresponds to 194–228; the sequence is MRPPPGPPPRRDPSPHGGPARRRRLLDVAVCTDRA. Residues 229–249 form a helical membrane-spanning segment; sequence FVVYVVTKFLMALGLFVPAIL. Residues 250–257 are Extracellular-facing; sequence LVNYAKDA. A helical membrane pass occupies residues 258 to 278; the sequence is GVPDAEAAFLLSIVGFVDIVA. Over 279 to 293 the chain is Cytoplasmic; that stretch reads RPACGALAGLGRLRP. A helical membrane pass occupies residues 294 to 314; the sequence is HVPYLFSLALLANGLTDLISA. At 315–318 the chain is on the extracellular side; that stretch reads RARS. Residues 319–339 form a helical membrane-spanning segment; that stretch reads YGTLVAFCIAFGLSYGMVGAL. Over 340–352 the chain is Cytoplasmic; sequence QFEVLMATVGAPR. The helical transmembrane segment at 353-373 threads the bilayer; it reads FPSALGLVLLVEAVAVLIGPP. The Extracellular segment spans residues 374–386; sequence SAGRLVDALKNYE. A helical membrane pass occupies residues 387-407; it reads IIFYLAGSEVALAGVFMAVTT. The Cytoplasmic segment spans residues 408-492; that stretch reads YCCLRCSKNI…GGHEARGQKA (85 aa). The interval 419-492 is disordered; sequence SGRSAEGGAS…GGHEARGQKA (74 aa). Basolateral sorting signal stretches follow at residues 426–460 and 461–482; these read GASDPEDVEAERDSEPMPASTEEPGSLEALEVLSP and RAGSPEQEPEEEAVPELDHESI. A compositionally biased stretch (basic and acidic residues) spans 476-492; it reads ELDHESIGGHEARGQKA.

The protein belongs to the major facilitator superfamily. Monocarboxylate porter (TC 2.A.1.13) family. In terms of tissue distribution, expressed exclusively in retinal pigment epithelium and choroid plexus epithelium.

It is found in the basolateral cell membrane. It carries out the reaction (S)-lactate(in) + H(+)(in) = (S)-lactate(out) + H(+)(out). Its function is as follows. Probable retinal pigment epithelium (RPE)-specific proton-coupled L-lactate transporter. May facilitate transport of lactate and H(+) out of the retina and could therefore play an essential role in maintenance of metabolic and ionic homeostasis of the outer retina. This is Monocarboxylate transporter 3 (Slc16a8) from Mus musculus (Mouse).